A 417-amino-acid polypeptide reads, in one-letter code: Signal recognition particle receptor FtsY (417 aa).

Residues 228–235 (GINGTGKT), 310–314 (DTAGR), and 368–371 (TKID) contribute to the GTP site.

Belongs to the GTP-binding SRP family. FtsY subfamily. Part of the signal recognition particle protein translocation system, which is composed of SRP and FtsY.

The protein localises to the cell membrane. It is found in the cytoplasm. It catalyses the reaction GTP + H2O = GDP + phosphate + H(+). In terms of biological role, involved in targeting and insertion of nascent membrane proteins into the cytoplasmic membrane. Acts as a receptor for the complex formed by the signal recognition particle (SRP) and the ribosome-nascent chain (RNC). This is Signal recognition particle receptor FtsY from Methanosarcina acetivorans (strain ATCC 35395 / DSM 2834 / JCM 12185 / C2A).